The following is a 479-amino-acid chain: Proline--tRNA ligase (479 aa).

It belongs to the class-II aminoacyl-tRNA synthetase family. ProS type 3 subfamily. In terms of assembly, homodimer.

The protein resides in the cytoplasm. The enzyme catalyses tRNA(Pro) + L-proline + ATP = L-prolyl-tRNA(Pro) + AMP + diphosphate. Catalyzes the attachment of proline to tRNA(Pro) in a two-step reaction: proline is first activated by ATP to form Pro-AMP and then transferred to the acceptor end of tRNA(Pro). The chain is Proline--tRNA ligase from Agathobacter rectalis (strain ATCC 33656 / DSM 3377 / JCM 17463 / KCTC 5835 / VPI 0990) (Eubacterium rectale).